A 348-amino-acid chain; its full sequence is Large ribosomal subunit protein uL3m (348 aa).

Residues 1 to 40 (MPGWRLLAQAGARVLGCGARGLGADPGLERRKNILFFVRN) constitute a mitochondrion transit peptide.

The protein belongs to the universal ribosomal protein uL3 family. As to quaternary structure, component of the mitochondrial ribosome large subunit (39S) which comprises a 16S rRNA and about 50 distinct proteins.

It localises to the mitochondrion. This is Large ribosomal subunit protein uL3m (Mrpl3) from Mus musculus (Mouse).